The following is a 110-amino-acid chain: UPF0060 membrane protein Pfl01_4105 (110 aa).

Transmembrane regions (helical) follow at residues 5–25, 28–48, 59–79, and 84–104; these read LWFFLAALFEIAGCFAFWMWL, GKSALWVIPALISLTLFALLL, AYAAYGGIYIIASIGWLAVVE, and LGSDWIGVALCVIGATVILFG.

This sequence belongs to the UPF0060 family.

The protein localises to the cell inner membrane. This is UPF0060 membrane protein Pfl01_4105 from Pseudomonas fluorescens (strain Pf0-1).